A 509-amino-acid polypeptide reads, in one-letter code: Lysophospholipid acyltransferase (509 aa).

Over Met-1–Ser-14 the chain is Lumenal. The chain crosses the membrane as a helical span at residues Phe-15 to Phe-35. The Cytoplasmic segment spans residues Ala-36–Ser-55. Residues Ile-56 to Phe-76 traverse the membrane as a helical segment. Topologically, residues Asp-77–Pro-94 are lumenal. A helical transmembrane segment spans residues Trp-95–Tyr-115. Topologically, residues Pro-116–Arg-223 are cytoplasmic. Residues Gly-224–Leu-244 form a helical membrane-spanning segment. Residues Thr-245 to Pro-246 are Lumenal-facing. Residues Lys-247–Ala-267 form a helical membrane-spanning segment. The Cytoplasmic segment spans residues Arg-268 to Asp-410. His-363 is a catalytic residue. Residues Val-411–Leu-431 form a helical membrane-spanning segment. Residues Asn-432–Lys-441 lie on the Lumenal side of the membrane. The helical transmembrane segment at Glu-442–Ile-462 threads the bilayer. At Arg-463–Glu-509 the chain is on the cytoplasmic side. The segment at Ser-488–Glu-509 is disordered. Phosphoserine is present on Ser-490. Positions Pro-500–Glu-509 are enriched in basic and acidic residues.

This sequence belongs to the membrane-bound acyltransferase family.

It localises to the endoplasmic reticulum membrane. The protein resides in the microsome membrane. The enzyme catalyses a 1-acyl-sn-glycero-3-phosphate + an acyl-CoA = a 1,2-diacyl-sn-glycero-3-phosphate + CoA. The catalysed reaction is a 1-acyl-sn-glycero-3-phosphocholine + an acyl-CoA = a 1,2-diacyl-sn-glycero-3-phosphocholine + CoA. It catalyses the reaction a 1-acyl-sn-glycero-3-phosphoethanolamine + an acyl-CoA = a 1,2-diacyl-sn-glycero-3-phosphoethanolamine + CoA. Membrane-bound O-acyltransferase that mediates the incorporation of unsaturated acyl chains into the sn-2 position of phospholipids. The chain is Lysophospholipid acyltransferase (ale1) from Schizosaccharomyces pombe (strain 972 / ATCC 24843) (Fission yeast).